Here is a 341-residue protein sequence, read N- to C-terminus: DNA-directed RNA polymerase subunit alpha (341 aa).

The tract at residues 1–233 (MLKDGTSVSN…DLLSPFLHTK (233 aa)) is alpha N-terminal domain (alpha-NTD). The alpha C-terminal domain (alpha-CTD) stretch occupies residues 262–341 (SEGDFFKNTF…NEKPRVVGDE (80 aa)).

This sequence belongs to the RNA polymerase alpha chain family. In terms of assembly, in plastids the minimal PEP RNA polymerase catalytic core is composed of four subunits: alpha, beta, beta', and beta''. When a (nuclear-encoded) sigma factor is associated with the core the holoenzyme is formed, which can initiate transcription.

It localises to the plastid. Its subcellular location is the chloroplast. The enzyme catalyses RNA(n) + a ribonucleoside 5'-triphosphate = RNA(n+1) + diphosphate. DNA-dependent RNA polymerase catalyzes the transcription of DNA into RNA using the four ribonucleoside triphosphates as substrates. The sequence is that of DNA-directed RNA polymerase subunit alpha from Marsilea quadrifolia (European water clover).